Consider the following 447-residue polypeptide: Cysteine--tRNA ligase (447 aa).

Cysteine 28 is a binding site for Zn(2+). The short motif at 30 to 40 (PTVYNYIHVGN) is the 'HIGH' region element. Zn(2+) is bound by residues cysteine 211, histidine 236, and glutamate 240. Residues 268–272 (KMSKS) carry the 'KMSKS' region motif. An ATP-binding site is contributed by lysine 271.

This sequence belongs to the class-I aminoacyl-tRNA synthetase family. As to quaternary structure, monomer. Zn(2+) is required as a cofactor.

The protein resides in the cytoplasm. The catalysed reaction is tRNA(Cys) + L-cysteine + ATP = L-cysteinyl-tRNA(Cys) + AMP + diphosphate. This chain is Cysteine--tRNA ligase, found in Streptococcus mutans serotype c (strain ATCC 700610 / UA159).